We begin with the raw amino-acid sequence, 332 residues long: UPF0194 membrane protein YbhG (332 aa).

Positions 1-16 are cleaved as a signal peptide; sequence MMKKPVVIGLAVVVLA. The stretch at 108 to 211 forms a coiled coil; that stretch reads EEIAQAAAAV…LQDSTLVAPS (104 aa).

This sequence belongs to the UPF0194 family.

Its subcellular location is the periplasm. The polypeptide is UPF0194 membrane protein YbhG (Escherichia coli O6:H1 (strain CFT073 / ATCC 700928 / UPEC)).